Here is a 316-residue protein sequence, read N- to C-terminus: MAMPFEIEVLLPGELSPAETSALQKCEGKIITFSTLRHRASLVDIALSSYYINGAPPDTLSLLEAYRMRFAAVITRVIPGKLLAHAIGVGTPTPGLFIQNTSPVDLCNGDYICLLPPVFGSADSIRLDSVGLEIVFPLTIPQTLMREIIAKVVARAVERTAAGAQILPHEVLRGADVICYNGRRYELETNLQHRDGSDAAIRTLVLNLMFSINEGCLLLLALIPTLLVQGAHDGYVNLLIQTANCVRETGQLINIPPMPRIQDGHRRFPIYETISSWISTSSRLGDTLGTRAILRVCVFDGPSTVHPGDRTAVIQV.

This sequence belongs to the herpesviridae TRX2 protein family. As to quaternary structure, interacts with TRX1 and major capisd protein/MCP.

It is found in the virion. The protein localises to the host nucleus. Functionally, structural component of the T=16 icosahedral capsid. The capsid is composed of pentamers and hexamers of major capsid protein/MCP, which are linked together by heterotrimers called triplexes. These triplexes are formed by a single molecule of triplex protein 1/TRX1 and two copies of triplex protein 2/TRX2. Additionally, TRX1 is required for efficient transport of TRX2 to the nucleus, which is the site of capsid assembly. The chain is Triplex capsid protein 2 from Homo sapiens (Human).